Reading from the N-terminus, the 447-residue chain is Tubulin beta chain (447 aa).

GTP is bound by residues glutamine 11, glutamate 69, serine 138, glycine 142, threonine 143, glycine 144, asparagine 204, and asparagine 226. Residue glutamate 69 coordinates Mg(2+). Residues 424–447 (QYQEASVSDAEEEYDEEAPLEGEE) are disordered. The segment covering 432–447 (DAEEEYDEEAPLEGEE) has biased composition (acidic residues).

The protein belongs to the tubulin family. In terms of assembly, dimer of alpha and beta chains. A typical microtubule is a hollow water-filled tube with an outer diameter of 25 nm and an inner diameter of 15 nM. Alpha-beta heterodimers associate head-to-tail to form protofilaments running lengthwise along the microtubule wall with the beta-tubulin subunit facing the microtubule plus end conferring a structural polarity. Microtubules usually have 13 protofilaments but different protofilament numbers can be found in some organisms and specialized cells. It depends on Mg(2+) as a cofactor.

The protein resides in the cytoplasm. It localises to the cytoskeleton. Functionally, tubulin is the major constituent of microtubules, a cylinder consisting of laterally associated linear protofilaments composed of alpha- and beta-tubulin heterodimers. Microtubules grow by the addition of GTP-tubulin dimers to the microtubule end, where a stabilizing cap forms. Below the cap, tubulin dimers are in GDP-bound state, owing to GTPase activity of alpha-tubulin. This is Tubulin beta chain (TUB1) from Zymoseptoria tritici (Speckled leaf blotch fungus).